The sequence spans 154 residues: Myoglobin (154 aa).

Positions 2–148 (GLSDGEWQLV…FRNDIAAKYK (147 aa)) constitute a Globin domain. Ser4 is subject to Phosphoserine. His65 contributes to the nitrite binding site. His65 serves as a coordination point for O2. Phosphothreonine is present on Thr68. His94 is a binding site for heme b.

This sequence belongs to the globin family. Monomeric.

It is found in the cytoplasm. The protein localises to the sarcoplasm. The catalysed reaction is Fe(III)-heme b-[protein] + nitric oxide + H2O = Fe(II)-heme b-[protein] + nitrite + 2 H(+). It carries out the reaction H2O2 + AH2 = A + 2 H2O. In terms of biological role, monomeric heme protein which primary function is to store oxygen and facilitate its diffusion within muscle tissues. Reversibly binds oxygen through a pentacoordinated heme iron and enables its timely and efficient release as needed during periods of heightened demand. Depending on the oxidative conditions of tissues and cells, and in addition to its ability to bind oxygen, it also has a nitrite reductase activity whereby it regulates the production of bioactive nitric oxide. Under stress conditions, like hypoxia and anoxia, it also protects cells against reactive oxygen species thanks to its pseudoperoxidase activity. In Ctenodactylus gundi (Northern gundi), this protein is Myoglobin (MB).